The sequence spans 452 residues: tRNA-2-methylthio-N(6)-dimethylallyladenosine synthase (452 aa).

The MTTase N-terminal domain occupies 16–134 (KRFFISTWGC…LPEYIERVKT (119 aa)). [4Fe-4S] cluster-binding residues include C25, C61, C95, C171, C175, and C178. The Radical SAM core domain maps to 157–387 (RKSDIKAFVT…VEAVNEIMAR (231 aa)). The TRAM domain occupies 390 to 452 (KEFEGKTVEV…NSFSLTGEII (63 aa)).

The protein belongs to the methylthiotransferase family. MiaB subfamily. As to quaternary structure, monomer. Requires [4Fe-4S] cluster as cofactor.

It localises to the cytoplasm. The enzyme catalyses N(6)-dimethylallyladenosine(37) in tRNA + (sulfur carrier)-SH + AH2 + 2 S-adenosyl-L-methionine = 2-methylsulfanyl-N(6)-dimethylallyladenosine(37) in tRNA + (sulfur carrier)-H + 5'-deoxyadenosine + L-methionine + A + S-adenosyl-L-homocysteine + 2 H(+). In terms of biological role, catalyzes the methylthiolation of N6-(dimethylallyl)adenosine (i(6)A), leading to the formation of 2-methylthio-N6-(dimethylallyl)adenosine (ms(2)i(6)A) at position 37 in tRNAs that read codons beginning with uridine. This is tRNA-2-methylthio-N(6)-dimethylallyladenosine synthase from Clostridium novyi (strain NT).